The following is a 395-amino-acid chain: Vascular endothelial growth factor A, long form (395 aa).

Disordered regions lie at residues 1–45 (MTDR…VEGV) and 73–175 (EAEP…AGPG). Over residues 73-85 (EAEPSGAARSASS) the composition is skewed to low complexity. Over residues 91–102 (QPEEGEEEEEKE) the composition is skewed to acidic residues. Composition is skewed to low complexity over residues 123 to 143 (AAVC…ARAS) and 165 to 175 (RRGSASRAGPG). 3 disulfides stabilise this stretch: cysteine 232–cysteine 274, cysteine 263–cysteine 308, and cysteine 267–cysteine 310. An N-linked (GlcNAc...) asparagine glycan is attached at asparagine 281. The span at 314–323 (KDRARQEKKS) shows a compositional bias: basic and acidic residues. The disordered stretch occupies residues 314–344 (KDRARQEKKSVRGKGKGQKRKRKKSRYKSWS). Basic residues predominate over residues 324 to 340 (VRGKGKGQKRKRKKSRY).

It belongs to the PDGF/VEGF growth factor family. In terms of assembly, homodimer; disulfide-linked. Also found as heterodimer with PGF. Interacts with NRP1. Interacts with isoform 2 of BSG. Interacts with CD82; this interaction inhibits VEGFA-mediated signaling pathway. Post-translationally, produced by use of an alternative upstream CUG codon and post-translationally processed into the N-terminal N-VEGF form and the C-terminal secreted VEGFA form. As to expression, higher expression in pituitary tumors than the pituitary gland. Widely expressed. In terms of tissue distribution, not widely expressed.

It is found in the cytoplasm. It localises to the nucleus. The protein resides in the secreted. Its subcellular location is the endoplasmic reticulum. The protein localises to the golgi apparatus. It is found in the extracellular space. It localises to the extracellular matrix. Functionally, participates in the induction of key genes involved in the response to hypoxia and in the induction of angiogenesis such as HIF1A. Involved in protecting cells from hypoxia-mediated cell death. In terms of biological role, growth factor active in angiogenesis, vasculogenesis and endothelial cell growth. Induces endothelial cell proliferation, promotes cell migration, inhibits apoptosis and induces permeabilization of blood vessels. Binds to the FLT1/VEGFR1 and KDR/VEGFR2 receptors, heparan sulfate and heparin. Binds to the NRP1/neuropilin-1 receptor. Binding to NRP1 initiates a signaling pathway needed for motor neuron axon guidance and cell body migration, including for the caudal migration of facial motor neurons from rhombomere 4 to rhombomere 6 during embryonic development. Also binds the DEAR/FBXW7-AS1 receptor. Its function is as follows. Binds to the KDR receptor but does not activate downstream signaling pathways, does not activate angiogenesis and inhibits tumor growth. In Homo sapiens (Human), this protein is Vascular endothelial growth factor A, long form (VEGFA).